The primary structure comprises 862 residues: MAKTNSYKKVIAGTMTAAMVAGIVSPVAAAGKSFPDVPAGHWAEGSINYLVDKGAITGKPDGTYGPTESIDRASAAVIFTKILNLPVDENAQPSFKDAKNIWSSKYIAAVEKAGVVKGDGKENFYPEGKIDRASFASMLVSAYNLKDKVNGELVTTFEDLLDHWGEEKANILINLGISVGTGGKWEPNKSVSRAEAAQFIALTDKKYGKKDNAQAYVTDVKVSEPTKLTLTGTGLDKLSADDVTLEGDKAVAIEASTDGTSAVVTLGGKVAPNKDLTVKVKNQSFVTKFVYEVKKLAVEKLTFDDDRAGQAIAFKLNDEKGNADVEYLNLANHDVKFVANNLDGSPANIFEGGEATSTTGKLAVGIKQGDYKVEVQVTKRGGLTVSNTGIITVKNLDTPASAIKNVVFALDADNDGVVNYGSKLSGKDFALNSQNLVVGEKASLNKLVATIAGEDKVVDPGSISIKSSNHGIISVVNNYITAEAAGEATLTIKVGDVTKDVKFKVTTDSRKLVSVKANPDKLQVVQNKTLPVTFVTTDQYGDPFGANTAAIKEVLPKTGVVAEGGLDVVTTDSGSIGTKTIGVTGNDVGEGTVHFQNGNGATLGSLYVNVTEGNVAFKNFELVSKVGQYGQSPDTKLDLNVSTTVEYQLSKYTSDRVYSDPENLEGYEVESKNLAVADAKIVGNKVVVTGKTPGKVDIHLTKNGATAGKATVEIVQETIAIKSVNFKPVQTENFVEKKINIGTVLELEKSNLDDIVKGINLTKETQHKVRVVKSGAEQGKLYLDRNGDAVFNAGDVKLGDVTVSQTSDSALPNFKADLYDTLTTKYTDKGTLVFKVLKDKDVITSEIGSQAVHVNVLNNPNL.

Positions 1 to 29 are cleaved as a signal peptide; the sequence is MAKTNSYKKVIAGTMTAAMVAGIVSPVAA. 3 consecutive SLH domains span residues 30–93, 94–151, and 152–214; these read AGKS…NAQP, SFKD…KVNG, and ELVT…DNAQ.

The protein localises to the secreted. It localises to the cell wall. The protein resides in the S-layer. Its function is as follows. The S-layer is a paracrystalline mono-layered assembly of proteins which coat the surface of bacteria. The chain is S-layer protein EA1 (eag) from Bacillus anthracis.